The sequence spans 195 residues: Imidazoleglycerol-phosphate dehydratase (195 aa).

The protein belongs to the imidazoleglycerol-phosphate dehydratase family.

The protein localises to the cytoplasm. It catalyses the reaction D-erythro-1-(imidazol-4-yl)glycerol 3-phosphate = 3-(imidazol-4-yl)-2-oxopropyl phosphate + H2O. The protein operates within amino-acid biosynthesis; L-histidine biosynthesis; L-histidine from 5-phospho-alpha-D-ribose 1-diphosphate: step 6/9. The protein is Imidazoleglycerol-phosphate dehydratase of Thermotoga petrophila (strain ATCC BAA-488 / DSM 13995 / JCM 10881 / RKU-1).